Consider the following 393-residue polypeptide: Flap endonuclease 1 (393 aa).

The interval 1-108 is N-domain; the sequence is MGILGLSKLL…SELQERRQRA (108 aa). A Mg(2+)-binding site is contributed by D34. R74 is a DNA binding site. Residues D90, E162, E164, D183, and D185 each coordinate Mg(2+). The interval 126-257 is I-domain; that stretch reads LMEKMSKRTV…QKAWEGIKKH (132 aa). E162 is a DNA binding site. 2 residues coordinate DNA: G235 and D237. D237 contacts Mg(2+). Residues 340 to 348 are interaction with PCNA; that stretch reads TQGRLDQFF.

Belongs to the XPG/RAD2 endonuclease family. FEN1 subfamily. In terms of assembly, interacts with PCNA. Three molecules of FEN1 bind to one PCNA trimer with each molecule binding to one PCNA monomer. PCNA stimulates the nuclease activity without altering cleavage specificity. Requires Mg(2+) as cofactor. In terms of processing, phosphorylated. Phosphorylation upon DNA damage induces relocalization to the nuclear plasma.

The protein resides in the nucleus. It localises to the nucleolus. The protein localises to the nucleoplasm. It is found in the mitochondrion. Structure-specific nuclease with 5'-flap endonuclease and 5'-3' exonuclease activities involved in DNA replication and repair. During DNA replication, cleaves the 5'-overhanging flap structure that is generated by displacement synthesis when DNA polymerase encounters the 5'-end of a downstream Okazaki fragment. It enters the flap from the 5'-end and then tracks to cleave the flap base, leaving a nick for ligation. Also involved in the long patch base excision repair (LP-BER) pathway, by cleaving within the apurinic/apyrimidinic (AP) site-terminated flap. Acts as a genome stabilization factor that prevents flaps from equilibrating into structures that lead to duplications and deletions. Also possesses 5'-3' exonuclease activity on nicked or gapped double-stranded DNA, and exhibits RNase H activity. Also involved in replication and repair of rDNA and in repairing mitochondrial DNA. This Trypanosoma cruzi (strain CL Brener) protein is Flap endonuclease 1.